A 409-amino-acid chain; its full sequence is FBD-associated F-box protein At4g10400 (409 aa).

The region spanning 1-47 is the F-box domain; it reads MDRISGLPDEVLVKILSFVPTKVAVSTSILSKRWEFLWMWLTKLKFG. The region spanning 330–379 is the FBD domain; the sequence is SWNQPSIVPECMLSSLQKFTWFKYLGRPQDRDIAVYILKNACRLRTATIK.

The protein is FBD-associated F-box protein At4g10400 of Arabidopsis thaliana (Mouse-ear cress).